A 146-amino-acid chain; its full sequence is VHWTAEEKQLITGLWGKVNVADCGAEALARLLIVYPWTQRFFSSFGNLSSPTAILGNPMVRAHGKKVLTSFGDAVKNLDNIKNTFAQLSELHCDKLHVDPENFRLLGDILIIVLAAHFAKDFTPDCQAAWQKLVRVVAHALARKYH.

Residues 2–146 (HWTAEEKQLI…VAHALARKYH (145 aa)) form the Globin domain. H63 and H92 together coordinate heme b.

The protein belongs to the globin family. As to quaternary structure, heterotetramer of two alpha chains and two beta chains. In terms of tissue distribution, red blood cells.

In terms of biological role, involved in oxygen transport from the lung to the various peripheral tissues. The sequence is that of Hemoglobin subunit beta (HBB) from Branta canadensis (Canada goose).